Consider the following 111-residue polypeptide: Beta-2-microglobulin (111 aa).

The signal sequence occupies residues 1-17 (MRALILLSLGLLRVAVP). Positions 20-111 (PQVVVYTYKP…KTSIYKLESF (92 aa)) constitute an Ig-like C1-type domain.

The protein belongs to the beta-2-microglobulin family. As to quaternary structure, heterodimer of an alpha chain and a beta chain. Beta-2-microglobulin is the beta-chain of major histocompatibility complex class I molecules.

It is found in the secreted. Component of the class I major histocompatibility complex (MHC). Involved in the presentation of peptide antigens to the immune system. This Rostroraja eglanteria (Clearnose skate) protein is Beta-2-microglobulin (b2m).